Consider the following 434-residue polypeptide: Trigger factor (434 aa).

Positions 161-246 (GKRVSIDFVG…VNKVEARELP (86 aa)) constitute a PPIase FKBP-type domain.

The protein belongs to the FKBP-type PPIase family. Tig subfamily.

It is found in the cytoplasm. The enzyme catalyses [protein]-peptidylproline (omega=180) = [protein]-peptidylproline (omega=0). Involved in protein export. Acts as a chaperone by maintaining the newly synthesized protein in an open conformation. Functions as a peptidyl-prolyl cis-trans isomerase. The sequence is that of Trigger factor from Vibrio parahaemolyticus serotype O3:K6 (strain RIMD 2210633).